The sequence spans 197 residues: Protein TIFY 9 (197 aa).

Polar residues predominate over residues serine 57–serine 73. The interval serine 57–isoleucine 84 is disordered. One can recognise a Tify domain in the interval leucine 98–glutamate 132. The short motif at proline 168–tyrosine 193 is the Jas element. A Nuclear localization signal motif is present at residues alanine 170–arginine 177.

Belongs to the TIFY/JAZ family. As to quaternary structure, homo- and heterodimer. Interacts with MYC2, MYC3, MYC4, AFPH2/NINJA, TIFY10A/JAZ1, TIFY10B/JAZ2, TIFY6B/JAZ3, TIFY6A/JAZ4, TIFY11B/JAZ6, TIFY5A/JAZ8, TIFY7/JAZ9, TIFY3A/JAZ11 and TIFY3B/JAZ12. Isoform 1 and isoform 2 interact with COI1. Isoform 3 does not interact with COI1. Interacts with RHD6 and RSL1. In terms of processing, ubiquitinated. Targeted for degradation by the SCF(COI1) E3 ubiquitin ligase-proteasome pathway during jasmonate signaling.

The protein localises to the nucleus. Functionally, repressor of jasmonate (JA) responses that lacks the entire Jas domain and possesses severe JA insensitivity and resistance to JA-induced degradation. Acts as an endogenous repressor of JA signal output in JA-stimulated cells. Modulator of JA-controlled growth inhibition in response to wounding. Its function is as follows. Repressor of jasmonate (JA) responses that lacks part of the Jas domain and possesses JA insensitivity and partial resistance to JA-induced degradation. In terms of biological role, repressor of jasmonate (JA) responses. Interacts with and suppresses RHD6 and RSL1 transcription factor activities to negatively regulate jasmonate-stimulated root hair development. The sequence is that of Protein TIFY 9 (TIFY9) from Arabidopsis thaliana (Mouse-ear cress).